The primary structure comprises 461 residues: Argininosuccinate lyase (461 aa).

It belongs to the lyase 1 family. Argininosuccinate lyase subfamily.

The protein resides in the cytoplasm. The catalysed reaction is 2-(N(omega)-L-arginino)succinate = fumarate + L-arginine. Its pathway is amino-acid biosynthesis; L-arginine biosynthesis; L-arginine from L-ornithine and carbamoyl phosphate: step 3/3. In Streptococcus gordonii (strain Challis / ATCC 35105 / BCRC 15272 / CH1 / DL1 / V288), this protein is Argininosuccinate lyase.